The primary structure comprises 875 residues: Valine--tRNA ligase (875 aa).

A 'HIGH' region motif is present at residues 44-54; it reads PNVTGKLHLGH. Positions 520–524 match the 'KMSKS' region motif; that stretch reads KMSKS. Lysine 523 lines the ATP pocket. Residues 804-875 are a coiled coil; that stretch reads LEGLINIEEE…VRARLAQLKQ (72 aa).

It belongs to the class-I aminoacyl-tRNA synthetase family. ValS type 1 subfamily. In terms of assembly, monomer.

The protein resides in the cytoplasm. It catalyses the reaction tRNA(Val) + L-valine + ATP = L-valyl-tRNA(Val) + AMP + diphosphate. In terms of biological role, catalyzes the attachment of valine to tRNA(Val). As ValRS can inadvertently accommodate and process structurally similar amino acids such as threonine, to avoid such errors, it has a 'posttransfer' editing activity that hydrolyzes mischarged Thr-tRNA(Val) in a tRNA-dependent manner. The polypeptide is Valine--tRNA ligase (Anoxybacillus flavithermus (strain DSM 21510 / WK1)).